Here is a 133-residue protein sequence, read N- to C-terminus: Ribulose bisphosphate carboxylase small subunit (133 aa).

It belongs to the RuBisCO small chain family. Heterohexadecamer of 8 large and 8 small subunits.

RuBisCO catalyzes two reactions: the carboxylation of D-ribulose 1,5-bisphosphate, the primary event in carbon dioxide fixation, as well as the oxidative fragmentation of the pentose substrate. Both reactions occur simultaneously and in competition at the same active site. Although the small subunit is not catalytic it is essential for maximal activity. The sequence is that of Ribulose bisphosphate carboxylase small subunit from Xanthobacter flavus.